Here is a 629-residue protein sequence, read N- to C-terminus: MVIGGGHAGVEASIVSAKMGAKTHLITLLIQNIALASCNPAVGGLGKGHLVKEIDALGGVMGVITDKCGIQFRILNASKGPAVRGTRAQIDMDRYSIFAKEIALNTPNLTISQESVESLIYEQDSKGRYIVKGVTTNIGKTYFAKKVILTTGTFLRGLVHIGETKLQNGRFGEMSPQNLSNSLQDMGLTLGRLKTGTCARIDGRSIDFSALEIHNGDEKPPHFSYKTINFSPTQLPCFVTYTNENTHKIIRDNFHRAPLFTGQIEGVGPRYCPSIEDKVNRFADKSRHQLFLEPQTQEAVEYYINGLSTSLPIDVQEAVIHSIKGLENAHITRYGYAIEYDYVEPTELYHTLETKKCANLFLAGQINGTTGYEEAAAQGIMAGINATLSLQNKSFTLARNEAYIGVMIDDLVTKGTKEPYRVFTSRAEYRLLLREDNAYLRLGTYAYKFGLIDKVRYTQIMADKTHIEHTINYLQNHHITPSSSNLTMLASLGLPPISDKALLIHIVGREELDCALLRTLLTHLGITDVESMSDLAIEQIFIESKYFDYIQKQKQQIGQMRQMLQVEIPRDFIFDNIPGLSLEVIEKLKKFTPKSLFEANEISGITPASIDVLHLYIHLHHKKKSQILV.

4–9 (GGGHAG) contributes to the FAD binding site. 268–282 (GPRYCPSIEDKVNRF) is a binding site for NAD(+).

Belongs to the MnmG family. As to quaternary structure, homodimer. Heterotetramer of two MnmE and two MnmG subunits. It depends on FAD as a cofactor.

It is found in the cytoplasm. Functionally, NAD-binding protein involved in the addition of a carboxymethylaminomethyl (cmnm) group at the wobble position (U34) of certain tRNAs, forming tRNA-cmnm(5)s(2)U34. The chain is tRNA uridine 5-carboxymethylaminomethyl modification enzyme MnmG from Helicobacter hepaticus (strain ATCC 51449 / 3B1).